A 147-amino-acid chain; its full sequence is Heavy metal-associated isoprenylated plant protein 27 (147 aa).

In terms of domain architecture, HMA spans 18 to 82; it reads FQKVEIKVKM…VMHRTGKKAE (65 aa). A metal cation is bound by residues cysteine 29 and cysteine 32. Cysteine 144 carries the cysteine methyl ester modification. Cysteine 144 carries the S-farnesyl cysteine lipid modification. A propeptide spans 145–147 (removed in mature form); that stretch reads TIM.

Belongs to the HIPP family. As to quaternary structure, interacts with UBP16. Interacts with ZHD11/HB29.

Its subcellular location is the membrane. Its function is as follows. Heavy-metal-binding protein. Binds cadmium. May be involved in cadmium transport and play a role in cadmium detoxification. The protein is Heavy metal-associated isoprenylated plant protein 27 of Arabidopsis thaliana (Mouse-ear cress).